Here is a 191-residue protein sequence, read N- to C-terminus: MPLVFVYGTLKKGQPNYFRLIDSSNGQAEFITCARTVEPYPLVITGECNIPFLLNVPGSGQRVYGEIYSVDQKMLEFLDWFEECPDWYQRTLIQLEILKGNGETEVEEAFVYTKTKYEPDWLNKPTYDSYDSNGDHGLKYAYEEDMTRSTLDQKSADFSQNSEQEIKKNNSLQILTSTGDDHDVNFRGPLQ.

7-10 (YGTL) is a binding site for substrate. The Proton acceptor role is filled by Glu82. Polar residues predominate over residues 155 to 178 (SADFSQNSEQEIKKNNSLQILTST). The disordered stretch occupies residues 155–191 (SADFSQNSEQEIKKNNSLQILTSTGDDHDVNFRGPLQ).

Belongs to the gamma-glutamylcyclotransferase family.

The catalysed reaction is epsilon-(gamma-L-glutamyl)-L-lysine = 5-oxo-L-proline + L-lysine. In terms of biological role, may contribute to degradation of proteins cross-linked by transglutaminases by degrading the cross-link between a lysine and a glutamic acid residue. Catalyzes the formation of 5-oxo-L-proline from L-gamma-glutamyl-L-epsilon-lysine. The polypeptide is Gamma-glutamylaminecyclotransferase B (ggact.2) (Danio rerio (Zebrafish)).